Reading from the N-terminus, the 186-residue chain is Elongation factor P (186 aa).

This sequence belongs to the elongation factor P family.

The protein localises to the cytoplasm. The protein operates within protein biosynthesis; polypeptide chain elongation. Its function is as follows. Involved in peptide bond synthesis. Stimulates efficient translation and peptide-bond synthesis on native or reconstituted 70S ribosomes in vitro. Probably functions indirectly by altering the affinity of the ribosome for aminoacyl-tRNA, thus increasing their reactivity as acceptors for peptidyl transferase. The sequence is that of Elongation factor P from Brucella abortus (strain S19).